The sequence spans 392 residues: Acetyl-CoA acetyltransferase (392 aa).

Residue cysteine 89 is the Acyl-thioester intermediate of the active site. Residues histidine 348 and cysteine 378 each act as proton acceptor in the active site.

This sequence belongs to the thiolase-like superfamily. Thiolase family. In terms of assembly, homotetramer.

Its subcellular location is the cytoplasm. It carries out the reaction 2 acetyl-CoA = acetoacetyl-CoA + CoA. It participates in biopolymer metabolism; poly-(R)-3-hydroxybutanoate biosynthesis. The protein operates within metabolic intermediate biosynthesis; (R)-mevalonate biosynthesis; (R)-mevalonate from acetyl-CoA: step 1/3. The chain is Acetyl-CoA acetyltransferase from Shinella zoogloeoides (Crabtreella saccharophila).